A 243-amino-acid polypeptide reads, in one-letter code: Venom nerve growth factor (243 aa).

Residues 1–18 (MSMLCYTLIIAFLIGIWA) form the signal peptide. Positions 19–125 (APKSEDNVPL…TLNRNIRTKR (107 aa)) are excised as a propeptide. A disordered region spans residues 45 to 66 (HEGLKTSRNTDQRHLAPKKAED). A compositionally biased stretch (basic and acidic residues) spans 46 to 66 (EGLKTSRNTDQRHLAPKKAED). Intrachain disulfides connect C139–C204, C182–C232, and C192–C234. N148 carries N-linked (GlcNAc...) asparagine glycosylation.

It belongs to the NGF-beta family. As to quaternary structure, homodimer; non-covalently linked. In terms of tissue distribution, expressed by the venom gland.

It localises to the secreted. Its function is as follows. Nerve growth factor is important for the development and maintenance of the sympathetic and sensory nervous systems. It stimulates division and differentiation of sympathetic and embryonic sensory neurons as well as basal forebrain cholinergic neurons in the brain. Its relevance in the snake venom is not clear. However, it has been shown to inhibit metalloproteinase-dependent proteolysis of platelet glycoprotein Ib alpha, suggesting a metalloproteinase inhibition to prevent metalloprotease autodigestion and/or protection against prey proteases. Binds a lipid between the two protein chains in the homodimer. The lipid-bound form promotes histamine relase from mouse mast cells, contrary to the lipid-free form. The protein is Venom nerve growth factor of Cryptophis nigrescens (Eastern small-eyed snake).